The following is a 152-amino-acid chain: Leptin (152 aa).

Positions 1 to 26 (MDHILALVLALLPLSLCVALPGALDA) are cleaved as a signal peptide. Cys109 and Cys152 are oxidised to a cystine.

Belongs to the leptin family. Expressed mostly in the liver.

It localises to the secreted. In terms of biological role, may function as part of a signaling pathway that acts to regulate the size of the body fat depot. This is Leptin (lep) from Takifugu rubripes (Japanese pufferfish).